The following is a 367-amino-acid chain: snRNA-activating protein complex subunit 1 (367 aa).

Residues 1-168 (MGTPPGLQTD…EEFKDPSDRV (168 aa)) are SNAPC3-binding. An SNAPC4-binding region spans residues 164-268 (PSDRVMKLIT…AESLAKIKSK (105 aa)). Disordered stretches follow at residues 228–254 (KDRK…QETE) and 278–367 (KSRR…KRKH). Residues 238 to 254 (KINDGEEKMEGNSQETE) show a composition bias toward basic and acidic residues. 2 positions are modified to phosphoserine: Ser-289 and Ser-290. Positions 292-301 (CDSASGQGQV) are enriched in polar residues.

As to quaternary structure, part of the SNAPc complex composed of 5 subunits: SNAPC1, SNAPC2, SNAPC3, SNAPC4 and SNAPC5. SNAPC1 interacts with SNAPC3, SNAPC4 and TBP.

Its subcellular location is the nucleus. Functionally, part of the SNAPc complex required for the transcription of both RNA polymerase II and III small-nuclear RNA genes. Binds to the proximal sequence element (PSE), a non-TATA-box basal promoter element common to these 2 types of genes. Recruits TBP and BRF2 to the U6 snRNA TATA box. This is snRNA-activating protein complex subunit 1 (SNAPC1) from Macaca fascicularis (Crab-eating macaque).